A 695-amino-acid polypeptide reads, in one-letter code: MPPRCRRLPLLFILLLAVRPLSAAAASSIAAAPASSYRRISWASNLTLLGSASLLPGAAGVALTTPSRDGVGAGRALFSEPVRLLLPQDAAASASASRAATPASFSTRFTFRITPSPTYGDGLAFLLTSSRTFLGASNGFLGLFPSSSASDEGELRDVSTVAVEIDTHLDVALHDPDGNHVALDAGSIFSVASAQPGVDLKAGVPITAWVEYRAPRRRLNVWLSYSPSRRPEKPALSADVDLSGLLRTYMYAGFSASNGNGAALHVVERWTFRTFGFPNSSYAPPPTKYIGPMPPNNQPLPPPPSPSPSPPPPSPPPPPHPNHRRRHLFYKVLGGVLGGMVLLGLVVVGSAVLLGRSVRRKNQEHAVASEDMGEATLSMEVARAATKGFDSGNVIGVGGSGATVYEGVLPSGSRVAVKRFQAIGSCTKAFDSELKAMLNCPHHPNLVPLAGWCRSKDELVLVYEFMPNGNLDSALHTLGGATLPWEARFRAVYGVASALAYLHDECENRIIHRDVKSSNVMLDAEFNARLGDFGLARTVSHGGLPLTTQPAGTLGYLAPEYVHTGVATERSDVYSFGVLALEVATGRRPAERGISVVNWVWTLWGRRRLVDAADRRLQGRFVADEMRRVLLVGLCCVHPDCRKRPGMRRVVSMLDGTAPLILVPDKMPPVLLQPVPNASSMNSADTANTAFFSCR.

The signal sequence occupies residues 1–23 (MPPRCRRLPLLFILLLAVRPLSA). At 24-331 (AAASSIAAAP…NHRRRHLFYK (308 aa)) the chain is on the extracellular side. The segment at 37 to 276 (YRRISWASNL…VERWTFRTFG (240 aa)) is legume-lectin like. Asn-45 and Asn-279 each carry an N-linked (GlcNAc...) asparagine glycan. Positions 286 to 320 (PTKYIGPMPPNNQPLPPPPSPSPSPPPPSPPPPPH) are enriched in pro residues. The segment at 286–323 (PTKYIGPMPPNNQPLPPPPSPSPSPPPPSPPPPPHPNH) is disordered. A helical transmembrane segment spans residues 332–352 (VLGGVLGGMVLLGLVVVGSAV). Residues 353-695 (LLGRSVRRKN…TANTAFFSCR (343 aa)) are Cytoplasmic-facing. Thr-376 carries the post-translational modification Phosphothreonine. Ser-378 is modified (phosphoserine). Phosphothreonine occurs at positions 386 and 403. The 273-residue stretch at 389–661 (FDSGNVIGVG…SMLDGTAPLI (273 aa)) folds into the Protein kinase domain. ATP-binding positions include 395-403 (IGVGGSGAT) and Lys-418. Residue Asp-514 is the Proton acceptor of the active site. Thr-657 carries the phosphothreonine modification.

This sequence in the N-terminal section; belongs to the leguminous lectin family. The protein in the C-terminal section; belongs to the protein kinase superfamily. Ser/Thr protein kinase family. Interacts with INP1. Interaction with INP1 is required for DAF1 polar localization at the future aperture sites in tetrads. Autophosphorylated at Thr-376; Ser-378; Thr-386; Thr-403 and Thr-657. Expressed in roots, leaves, lemma, palea, pistil and anthers.

Its subcellular location is the cell membrane. The protein resides in the cytoplasm. It is found in the cytosol. The catalysed reaction is L-seryl-[protein] + ATP = O-phospho-L-seryl-[protein] + ADP + H(+). The enzyme catalyses L-threonyl-[protein] + ATP = O-phospho-L-threonyl-[protein] + ADP + H(+). Its function is as follows. Legume-lectin receptor-like kinase required for normal pollen development and male fertility. Regulates pollen exine assembly and aperture development. Plays a critical role in annulus formation, and may participate in the formation of the fibrillar-granular layer underneath the operculum. May function by regulating the expression of genes involved in pollen exine development. Kinase activity is required for its function in pollen development. In Oryza sativa subsp. japonica (Rice), this protein is L-type lectin-domain containing receptor kinase S.7.